The chain runs to 636 residues: Chaperone protein DnaK2 (636 aa).

Thr198 bears the Phosphothreonine; by autocatalysis mark. Positions 604–618 (EAGVGAPGAGPEAGT) are enriched in low complexity. Residues 604-636 (EAGVGAPGAGPEAGTSSGGGDDVIDAEFSEPEK) form a disordered region. Positions 625–636 (DVIDAEFSEPEK) are enriched in acidic residues.

It belongs to the heat shock protein 70 family.

In terms of biological role, acts as a chaperone. In Synechocystis sp. (strain ATCC 27184 / PCC 6803 / Kazusa), this protein is Chaperone protein DnaK2 (dnaK2).